The chain runs to 185 residues: Ribosome-recycling factor (185 aa).

It belongs to the RRF family.

It localises to the cytoplasm. In terms of biological role, responsible for the release of ribosomes from messenger RNA at the termination of protein biosynthesis. May increase the efficiency of translation by recycling ribosomes from one round of translation to another. This chain is Ribosome-recycling factor, found in Clostridium beijerinckii (strain ATCC 51743 / NCIMB 8052) (Clostridium acetobutylicum).